The sequence spans 495 residues: Ribose import ATP-binding protein RbsA 3 (495 aa).

2 ABC transporter domains span residues 5–240 (VRLR…VGRE) and 250–492 (AEIG…TGVK). 37–44 (GENGAGKS) serves as a coordination point for ATP.

This sequence belongs to the ABC transporter superfamily. Ribose importer (TC 3.A.1.2.1) family. The complex is composed of an ATP-binding protein (RbsA), two transmembrane proteins (RbsC) and a solute-binding protein (RbsB).

The protein resides in the cell membrane. It catalyses the reaction D-ribose(out) + ATP + H2O = D-ribose(in) + ADP + phosphate + H(+). Part of the ABC transporter complex RbsABC involved in ribose import. Responsible for energy coupling to the transport system. This is Ribose import ATP-binding protein RbsA 3 from Rubrobacter xylanophilus (strain DSM 9941 / JCM 11954 / NBRC 16129 / PRD-1).